The following is a 616-amino-acid chain: Chaperone protein HscA (616 aa).

It belongs to the heat shock protein 70 family.

Functionally, chaperone involved in the maturation of iron-sulfur cluster-containing proteins. Has a low intrinsic ATPase activity which is markedly stimulated by HscB. Involved in the maturation of IscU. This chain is Chaperone protein HscA, found in Salmonella paratyphi C (strain RKS4594).